The following is a 408-amino-acid chain: Solute carrier family 35 member F1 (408 aa).

Residues 1 to 20 (MIPPEPPQPQLQPPPPPAPP) form a disordered region. 10 consecutive transmembrane segments (helical) span residues 60–80 (MLIS…IGLT), 94–114 (VFQS…TLAV), 129–147 (WWKY…YLVV), 159–179 (QLLD…FLLI), 186–206 (FIGI…DVLV), 221–241 (LLVL…ESII), 247–267 (VEFL…QLAI), 284–304 (LLYV…PVVI), 311–331 (SVNL…LFLF), and 335–355 (FSGL…LYSS).

It belongs to the SLC35F solute transporter family.

It is found in the cytoplasmic vesicle. The protein localises to the secretory vesicle. The protein resides in the synaptic vesicle membrane. In terms of biological role, putative solute transporter. The sequence is that of Solute carrier family 35 member F1 (Slc35f1) from Mus musculus (Mouse).